A 113-amino-acid polypeptide reads, in one-letter code: MFSIRIATVVLAASALLAAASPITNTETPVNQCGSGSIQCCESVQSASAAQAAGILGPLDILTNLQGLVASHCSPLAAVGVSGTSCSSQTVCCKDVSKSGLVNLGCSPINLNL.

A signal peptide spans 1–20 (MFSIRIATVVLAASALLAAA). Disulfide bonds link C33–C92, C40–C86, C41–C73, and C93–C106.

The protein belongs to the fungal hydrophobin family. In terms of assembly, self-assembles to form functional amyloid fibrils called rodlets. Self-assembly into fibrillar rodlets occurs spontaneously at hydrophobic:hydrophilic interfaces and the rodlets further associate laterally to form amphipathic monolayers.

Its subcellular location is the secreted. It localises to the cell wall. Aerial growth, conidiation, and dispersal of filamentous fungi in the environment rely upon a capability of their secreting small amphipathic proteins called hydrophobins (HPBs) with low sequence identity. Class I can self-assemble into an outermost layer of rodlet bundles on aerial cell surfaces, conferring cellular hydrophobicity that supports fungal growth, development and dispersal; whereas Class II form highly ordered films at water-air interfaces through intermolecular interactions but contribute nothing to the rodlet structure. Fbh1 is a fruiting body-specific class I hydrophobin that is involved in the growth rate and primordia formation. This is Fruiting body-specific class I hydrophobin fbh1 from Pleurotus ostreatus (strain PC15) (Oyster mushroom).